We begin with the raw amino-acid sequence, 82 residues long: Small ribosomal subunit protein uS17 (82 aa).

It belongs to the universal ribosomal protein uS17 family. Part of the 30S ribosomal subunit.

Functionally, one of the primary rRNA binding proteins, it binds specifically to the 5'-end of 16S ribosomal RNA. The protein is Small ribosomal subunit protein uS17 of Shewanella halifaxensis (strain HAW-EB4).